A 331-amino-acid chain; its full sequence is Nucleoporin Nup35 (331 aa).

2 disordered regions span residues 1–63 (MEPM…HELN) and 79–110 (AHTA…GLFD). Polar residues-rich tracts occupy residues 8-20 (SPVN…QTQY), 35-56 (HKNT…SPGG), and 84-104 (GANS…TGPP). Positions 187 to 268 (RLSDFWVTIF…SRCTDRSVID (82 aa)) constitute an RRM Nup35-type domain.

The protein belongs to the Nup35 family. As to quaternary structure, interacts with Nup154.

Its subcellular location is the nucleus. It localises to the nuclear pore complex. Functionally, functions as a component of the nuclear pore complex (NPC). May have a role in the organization of the inner nuclear membrane proteins at the nuclear envelope together with Nup154. This Drosophila melanogaster (Fruit fly) protein is Nucleoporin Nup35.